We begin with the raw amino-acid sequence, 214 residues long: Large ribosomal subunit protein bL25 (214 aa).

Positions 187-214 (AEVAPSIEETVEPEVIKKGKKAEEEEEK) are disordered. Residues 200 to 214 (EVIKKGKKAEEEEEK) are compositionally biased toward basic and acidic residues.

This sequence belongs to the bacterial ribosomal protein bL25 family. CTC subfamily. As to quaternary structure, part of the 50S ribosomal subunit; part of the 5S rRNA/L5/L18/L25 subcomplex. Contacts the 5S rRNA. Binds to the 5S rRNA independently of L5 and L18.

In terms of biological role, this is one of the proteins that binds to the 5S RNA in the ribosome where it forms part of the central protuberance. In Thermodesulfovibrio yellowstonii (strain ATCC 51303 / DSM 11347 / YP87), this protein is Large ribosomal subunit protein bL25.